The chain runs to 206 residues: N-(5'-phosphoribosyl)anthranilate isomerase (206 aa).

It belongs to the TrpF family.

It carries out the reaction N-(5-phospho-beta-D-ribosyl)anthranilate = 1-(2-carboxyphenylamino)-1-deoxy-D-ribulose 5-phosphate. It participates in amino-acid biosynthesis; L-tryptophan biosynthesis; L-tryptophan from chorismate: step 3/5. In Pseudomonas syringae pv. tomato (strain ATCC BAA-871 / DC3000), this protein is N-(5'-phosphoribosyl)anthranilate isomerase.